A 450-amino-acid polypeptide reads, in one-letter code: C4-dicarboxylate transport protein (450 aa).

8 helical membrane passes run 25–45, 56–76, 90–110, 162–182, 200–220, 234–254, 319–339, and 367–387; these read VVFAIIIGVLLGHFQPEYGAA, LIKMIIAPVIFLTIVTGIASM, MAYFLTFSTLALVVGLVVANV, ILQVLLVAVLFGVSLAMVGDA, LVNIVMKAAPIGAFGAMAFTI, LVLTFYITSAVFVLVVLGAVA, IYMTLAALFIAQATDTHLTLG, and AATLAVVPEVPVAGMALILGV.

This sequence belongs to the dicarboxylate/amino acid:cation symporter (DAACS) (TC 2.A.23) family.

It localises to the cell inner membrane. Its function is as follows. Responsible for the transport of dicarboxylates such as succinate, fumarate, and malate from the periplasm across the membrane. This is C4-dicarboxylate transport protein from Acidovorax ebreus (strain TPSY) (Diaphorobacter sp. (strain TPSY)).